The primary structure comprises 158 residues: MSRRHRAVKREILPDPKFGDVVITRFMNALMYDGKKSTAEGIVYGALEVLRRRGGASADPVVMFHSALDNVKPAVEVRSRRVGGATYQVPVEVRTERRQALAIRWLIDASRKRGENTMQERLSNELLDAVNNRGSAVKKREDTHRMAEANKAFSHYRW.

This sequence belongs to the universal ribosomal protein uS7 family. In terms of assembly, part of the 30S ribosomal subunit. Contacts proteins S9 and S11.

In terms of biological role, one of the primary rRNA binding proteins, it binds directly to 16S rRNA where it nucleates assembly of the head domain of the 30S subunit. Is located at the subunit interface close to the decoding center, probably blocks exit of the E-site tRNA. The sequence is that of Small ribosomal subunit protein uS7 from Gluconacetobacter diazotrophicus (strain ATCC 49037 / DSM 5601 / CCUG 37298 / CIP 103539 / LMG 7603 / PAl5).